Reading from the N-terminus, the 2948-residue chain is Transforming acidic coiled-coil-containing protein 2 (2948 aa).

Residues 1-30 are compositionally biased toward polar residues; it reads MGNENSTSDNQRTLSAQTPRSAQPPGNSQN. Disordered stretches follow at residues 1-304, 314-333, 392-453, 465-785, 825-964, 985-1050, 1062-1154, 1243-1274, 1296-1400, 1427-1463, 1493-1661, 1675-1705, 1741-1878, 1907-2035, and 2052-2460; these read MGNE…TDDL, RSNSGAAPEAEVNAASQESC, AAGG…MPVS, LVGL…PQGE, SSEK…VSPP, CTGQ…QPDS, ALAP…GEAT, AAQRGAEDSGVKAVSSADPRAPGESPCPVGEP, QPGA…EQIA, PGEKAGAGRSAVGKDLTRPLGPEKLLDGPPGVDVTLL, ASDK…GERR, LGNQSTPAPPTGEVADTPLEPGKVAGAAGEA, VLPG…ESPT, HAGL…SSGT, and LEPR…ETPP. The span at 174–184 shows a compositional bias: basic and acidic residues; that stretch reads GRERQPKEEGQ. Residues Ser197, Ser201, and Ser269 each carry the phosphoserine modification. Val325 is subject to Phosphothreonine. Ser493 carries the post-translational modification Phosphoserine. The segment covering 496–507 has biased composition (basic and acidic residues); sequence ERGEHLNTEQSH. A phosphoserine mark is found at Ser561, Ser571, and Ser575. Residues 604 to 629 are compositionally biased toward basic and acidic residues; that stretch reads SKRDPEVGKDELSKPSSDAESRDHPS. Ser758 bears the Phosphoserine mark. Residues 911–926 are compositionally biased toward low complexity; that stretch reads SDTPTSSPTDMVWESS. Ser962 bears the Phosphoserine mark. The segment covering 985–996 has biased composition (polar residues); the sequence is CTGQGPNKSQQA. Ser1025 carries the phosphoserine modification. Phosphoserine occurs at positions 1267 and 1313. A compositionally biased stretch (low complexity) spans 1348–1357; sequence ATAPGAGAKA. Residues 1383-1400 are compositionally biased toward polar residues; the sequence is DPKQGTSGGVDTSSEQIA. The residue at position 1562 (Ser1562) is a Phosphoserine. Composition is skewed to basic and acidic residues over residues 1801–1823 and 1834–1854; these read DETHDPKLQHLAPEELHTDRESP and PKKDAPRVMDKVTSDETRGAE. Positions 1862–1873 are enriched in low complexity; sequence ADDIIQPAAPAD. Over residues 1939 to 1948 the composition is skewed to basic and acidic residues; sequence PAKDLSRSSD. Residues 1963-1976 show a composition bias toward pro residues; that stretch reads KAPPAPPPPPPEVI. Ser2072 is subject to Phosphoserine. Over residues 2074–2102 the composition is skewed to polar residues; it reads DSVPISKSTLSRSLSLQASDFDGASSSGN. Low complexity predominate over residues 2114–2124; it reads STGSSSASSTL. Basic residues predominate over residues 2125–2141; the sequence is KRTKKPRPPSLKKKQTT. 2 positions are modified to phosphoserine: Ser2161 and Ser2226. Thr2246 is subject to Phosphothreonine. Position 2256 is a phosphoserine (Ser2256). Residues 2265–2275 show a composition bias toward basic and acidic residues; the sequence is LEFDYSEDKSS. The segment covering 2288-2305 has biased composition (basic residues); it reads KIGKKPVAKMPLRRPKMK. Residues 2315–2403 form the SPAZ domain; sequence PASPPRSPAE…SPASFEIPAS (89 aa). 7 positions are modified to phosphoserine: Ser2317, Ser2321, Ser2359, Ser2389, Ser2392, Ser2394, and Ser2403. A compositionally biased stretch (polar residues) spans 2348–2368; that stretch reads NPFSSTSKMQESPKLPQQSYN. Positions 2382 to 2395 are enriched in low complexity; sequence KTSSKTPSSPSKSP. Residues Thr2430, Thr2451, Thr2455, and Thr2458 each carry the phosphothreonine modification. A phosphoserine mark is found at Ser2512 and Ser2534. Thr2553 carries the phosphothreonine modification. Residues 2555–2577 are disordered; sequence QESPVKSSPVRMSESPTPCSGSS. Ser2557 and Ser2569 each carry phosphoserine. The span at 2568-2577 shows a compositional bias: polar residues; sequence ESPTPCSGSS. Thr2625 bears the Phosphothreonine mark. Coiled-coil stretches lie at residues 2675–2703 and 2746–2947; these read AQKLQEELEFAIMRIEALKLARQIALASR and DLDS…KMGK.

It belongs to the TACC family. In terms of assembly, interacts with CCDC100/CEP120. Interacts with microtubules. Interacts with YEATS4, GCN5L2 and PCAF. Phosphorylated by TTK; which is required for localization in centrosome. Strongly expressed in heart, skeletal muscle, brain, prostate, thyroid and trachea.

It localises to the cytoplasm. The protein localises to the nucleus. Its subcellular location is the cytoskeleton. The protein resides in the microtubule organizing center. It is found in the centrosome. Functionally, plays a role in the microtubule-dependent coupling of the nucleus and the centrosome. Involved in the processes that regulate centrosome-mediated interkinetic nuclear migration (INM) of neural progenitors. May play a role in organizing centrosomal microtubules. May act as a tumor suppressor protein. May represent a tumor progression marker. The protein is Transforming acidic coiled-coil-containing protein 2 (TACC2) of Homo sapiens (Human).